We begin with the raw amino-acid sequence, 147 residues long: Large ribosomal subunit protein uL15 (147 aa).

The tract at residues 1-62 (MKLHELKPAQ…GQQPLSRRMP (62 aa)) is disordered. Gly residues-rich tracts occupy residues 21-31 (RGIGSGTGKTS) and 42-52 (AGGGVRPGFEG).

Belongs to the universal ribosomal protein uL15 family. In terms of assembly, part of the 50S ribosomal subunit.

Functionally, binds to the 23S rRNA. The protein is Large ribosomal subunit protein uL15 of Desulfitobacterium hafniense (strain DSM 10664 / DCB-2).